A 173-amino-acid chain; its full sequence is T-complex protein 1 subunit alpha (173 aa).

It belongs to the TCP-1 chaperonin family. As to quaternary structure, component of the chaperonin-containing T-complex (TRiC), a heterooligomeric complex of about 850 to 900 kDa that forms two stacked rings, 12 to 16 nm in diameter.

It localises to the cytoplasm. The protein resides in the cytosol. In terms of biological role, component of the chaperonin-containing T-complex (TRiC), a molecular chaperone complex that assists the folding of proteins upon ATP hydrolysis. In Ambystoma mexicanum (Axolotl), this protein is T-complex protein 1 subunit alpha.